Reading from the N-terminus, the 640-residue chain is 1,4-alpha-glucan branching enzyme GlgB (640 aa).

The active-site Nucleophile is the D318. E371 acts as the Proton donor in catalysis.

Belongs to the glycosyl hydrolase 13 family. GlgB subfamily. In terms of assembly, monomer.

It carries out the reaction Transfers a segment of a (1-&gt;4)-alpha-D-glucan chain to a primary hydroxy group in a similar glucan chain.. It participates in glycan biosynthesis; glycogen biosynthesis. Its function is as follows. Catalyzes the formation of the alpha-1,6-glucosidic linkages in glycogen by scission of a 1,4-alpha-linked oligosaccharide from growing alpha-1,4-glucan chains and the subsequent attachment of the oligosaccharide to the alpha-1,6 position. The protein is 1,4-alpha-glucan branching enzyme GlgB of Francisella tularensis subsp. novicida (strain U112).